A 122-amino-acid polypeptide reads, in one-letter code: uncharacterized protein (122 aa).

This is an uncharacterized protein from Human adenovirus F serotype 41 (HAdV-41).